A 225-amino-acid polypeptide reads, in one-letter code: MSTIAIVDYGMGNFHSVARALQHAAPDADIRICNRPEQIDAADRVVFPGQGAMPDCMRTLNESGLRAAVERAAASKPLMGVCVGEQMLFERSEEGDTPCLGIFPGEVRRFAGPQFADPVAADQAAAAPPAAARERLKVPHMGWNQVRQTRSHALWEGIPDGTHFYFVHSYYAAPSDPALTTGVTDYGVAFTCAVAAANIFAVQFHPEKSAEHGLRLYRNFVDWQP.

Positions 3–225 constitute a Glutamine amidotransferase type-1 domain; sequence TIAIVDYGMG…LYRNFVDWQP (223 aa). Cys82 functions as the Nucleophile in the catalytic mechanism. Residues His205 and Glu207 contribute to the active site.

Heterodimer of HisH and HisF.

The protein resides in the cytoplasm. The enzyme catalyses 5-[(5-phospho-1-deoxy-D-ribulos-1-ylimino)methylamino]-1-(5-phospho-beta-D-ribosyl)imidazole-4-carboxamide + L-glutamine = D-erythro-1-(imidazol-4-yl)glycerol 3-phosphate + 5-amino-1-(5-phospho-beta-D-ribosyl)imidazole-4-carboxamide + L-glutamate + H(+). The catalysed reaction is L-glutamine + H2O = L-glutamate + NH4(+). Its pathway is amino-acid biosynthesis; L-histidine biosynthesis; L-histidine from 5-phospho-alpha-D-ribose 1-diphosphate: step 5/9. In terms of biological role, IGPS catalyzes the conversion of PRFAR and glutamine to IGP, AICAR and glutamate. The HisH subunit catalyzes the hydrolysis of glutamine to glutamate and ammonia as part of the synthesis of IGP and AICAR. The resulting ammonia molecule is channeled to the active site of HisF. This is Imidazole glycerol phosphate synthase subunit HisH from Bordetella bronchiseptica (strain ATCC BAA-588 / NCTC 13252 / RB50) (Alcaligenes bronchisepticus).